A 423-amino-acid chain; its full sequence is Serine--tRNA ligase (423 aa).

An L-serine-binding site is contributed by 230 to 232 (TAE). 261 to 263 (RSE) is a binding site for ATP. An L-serine-binding site is contributed by Glu-284. 348 to 351 (EISS) contributes to the ATP binding site. Ser-383 provides a ligand contact to L-serine.

This sequence belongs to the class-II aminoacyl-tRNA synthetase family. Type-1 seryl-tRNA synthetase subfamily. As to quaternary structure, homodimer. The tRNA molecule binds across the dimer.

It is found in the cytoplasm. It catalyses the reaction tRNA(Ser) + L-serine + ATP = L-seryl-tRNA(Ser) + AMP + diphosphate + H(+). The catalysed reaction is tRNA(Sec) + L-serine + ATP = L-seryl-tRNA(Sec) + AMP + diphosphate + H(+). Its pathway is aminoacyl-tRNA biosynthesis; selenocysteinyl-tRNA(Sec) biosynthesis; L-seryl-tRNA(Sec) from L-serine and tRNA(Sec): step 1/1. In terms of biological role, catalyzes the attachment of serine to tRNA(Ser). Is also able to aminoacylate tRNA(Sec) with serine, to form the misacylated tRNA L-seryl-tRNA(Sec), which will be further converted into selenocysteinyl-tRNA(Sec). In Levilactobacillus brevis (strain ATCC 367 / BCRC 12310 / CIP 105137 / JCM 1170 / LMG 11437 / NCIMB 947 / NCTC 947) (Lactobacillus brevis), this protein is Serine--tRNA ligase.